A 280-amino-acid chain; its full sequence is MTLLQALILAIVQGITEPFPVSSLGHAVLLPALLHWDLDEHAPMFLPFLTMLHVGTLVALAGVFWRDWMAILGGMFGRYGSYRQMEAIRIFGLLVIATIPAVLVGWLLEHRLRAVFGTPLAVAGFLILNGFLLMVTEWLRRQKGHRDHKPIATLAPKDAVIIGIWQCLALLPGLSRSGATMNGGLLRGLDHETAARFSLLMAQPIVLAATVREAWQMRHMTISHDIMVQCVAGAVVAGLTALICSLVMLRFFRNHDGWALTPFGVYCVLAGLFAGAVILL.

The next 7 membrane-spanning stretches (helical) occupy residues 1–21 (MTLL…PFPV), 45–65 (FLPF…GVFW), 90–110 (IFGL…LLEH), 115–135 (VFGT…LLMV), 151–171 (IATL…LALL), 226–246 (IMVQ…ICSL), and 260–280 (LTPF…VILL).

The protein belongs to the UppP family.

The protein resides in the cell inner membrane. The catalysed reaction is di-trans,octa-cis-undecaprenyl diphosphate + H2O = di-trans,octa-cis-undecaprenyl phosphate + phosphate + H(+). Functionally, catalyzes the dephosphorylation of undecaprenyl diphosphate (UPP). Confers resistance to bacitracin. The protein is Undecaprenyl-diphosphatase of Gluconobacter oxydans (strain 621H) (Gluconobacter suboxydans).